The chain runs to 192 residues: Glycerol-3-phosphate acyltransferase (192 aa).

Helical transmembrane passes span 4–24, 54–74, 80–100, 112–132, and 154–174; these read MFWL…AILL, LAIL…LIAS, IAQQ…PVYF, AGVL…AWLL, and LLAW…LLIV.

Belongs to the PlsY family. In terms of assembly, probably interacts with PlsX.

The protein localises to the cell inner membrane. The enzyme catalyses an acyl phosphate + sn-glycerol 3-phosphate = a 1-acyl-sn-glycero-3-phosphate + phosphate. It functions in the pathway lipid metabolism; phospholipid metabolism. Catalyzes the transfer of an acyl group from acyl-phosphate (acyl-PO(4)) to glycerol-3-phosphate (G3P) to form lysophosphatidic acid (LPA). This enzyme utilizes acyl-phosphate as fatty acyl donor, but not acyl-CoA or acyl-ACP. This chain is Glycerol-3-phosphate acyltransferase, found in Pseudomonas syringae pv. syringae (strain B728a).